Here is a 382-residue protein sequence, read N- to C-terminus: 8-amino-7-oxononanoate synthase (382 aa).

A substrate-binding site is contributed by arginine 26. Residue 104-105 participates in pyridoxal 5'-phosphate binding; sequence GY. Histidine 129 lines the substrate pocket. Pyridoxal 5'-phosphate contacts are provided by residues serine 175, 200–203, and 232–235; these read DEAH and TLSK. Lysine 235 carries the post-translational modification N6-(pyridoxal phosphate)lysine. Threonine 345 contributes to the substrate binding site.

It belongs to the class-II pyridoxal-phosphate-dependent aminotransferase family. BioF subfamily. As to quaternary structure, homodimer. The cofactor is pyridoxal 5'-phosphate.

The catalysed reaction is 6-carboxyhexanoyl-[ACP] + L-alanine + H(+) = (8S)-8-amino-7-oxononanoate + holo-[ACP] + CO2. Its pathway is cofactor biosynthesis; biotin biosynthesis. Catalyzes the decarboxylative condensation of pimeloyl-[acyl-carrier protein] and L-alanine to produce 8-amino-7-oxononanoate (AON), [acyl-carrier protein], and carbon dioxide. The polypeptide is 8-amino-7-oxononanoate synthase (Mycobacterium sp. (strain JLS)).